The chain runs to 248 residues: Segregation and condensation protein A (248 aa).

This sequence belongs to the ScpA family. In terms of assembly, component of a cohesin-like complex composed of ScpA, ScpB and the Smc homodimer, in which ScpA and ScpB bind to the head domain of Smc. The presence of the three proteins is required for the association of the complex with DNA.

Its subcellular location is the cytoplasm. In terms of biological role, participates in chromosomal partition during cell division. May act via the formation of a condensin-like complex containing Smc and ScpB that pull DNA away from mid-cell into both cell halves. This is Segregation and condensation protein A from Bacillus cytotoxicus (strain DSM 22905 / CIP 110041 / 391-98 / NVH 391-98).